A 376-amino-acid polypeptide reads, in one-letter code: UDP-N-acetylglucosamine 2-epimerase (376 aa).

Substrate contacts are provided by residues R10, K15, D95, E117, H213, Q271, F276, S290–G292, E296, and R313.

The protein belongs to the UDP-N-acetylglucosamine 2-epimerase family. As to quaternary structure, homodimer.

Its subcellular location is the cytoplasm. The catalysed reaction is UDP-N-acetyl-alpha-D-glucosamine = UDP-N-acetyl-alpha-D-mannosamine. It participates in bacterial outer membrane biogenesis; enterobacterial common antigen biosynthesis. In terms of biological role, catalyzes the reversible epimerization at C-2 of UDP-N-acetylglucosamine (UDP-GlcNAc) and thereby provides bacteria with UDP-N-acetylmannosamine (UDP-ManNAc), the activated donor of ManNAc residues. The sequence is that of UDP-N-acetylglucosamine 2-epimerase from Escherichia coli O157:H7.